The chain runs to 320 residues: MQTRKTFSWIKEQITRSISASLMIYIITRTSISSAYPIFAQQGYENPREATGRIVCANCHLANKPVDIEVPQAVLPDTVFEAVVRIPYDMQLKQVLANGKKGALNVGAVLILPEGFELAPVDRISPEMKERIGNLSFQSYRPTKKNILVIGPVPGQKYSEITFPILSPDPATKKDVHFLKYPIYVGGNRGRGQIYPDGSKSNNTVYNATAAGIVGKIIRKEKGGYEITITDASDGRQVVDIIPPGPELLVSEGESIKFDQPLTSNPNVGGFGQGDAEIVLQDPLRVQGLLFFLASVILAQIFLVLKKKQFEKVQLSEMNF.

A signal peptide spans 1–35 (MQTRKTFSWIKEQITRSISASLMIYIITRTSISSA). Positions 36, 56, 59, and 60 each coordinate heme. A helical transmembrane segment spans residues 286–306 (VQGLLFFLASVILAQIFLVLK).

The protein belongs to the cytochrome f family. The 4 large subunits of the cytochrome b6-f complex are cytochrome b6, subunit IV (17 kDa polypeptide, petD), cytochrome f and the Rieske protein, while the 4 small subunits are PetG, PetL, PetM and PetN. The complex functions as a dimer. The cofactor is heme.

Its subcellular location is the plastid. The protein resides in the chloroplast thylakoid membrane. In terms of biological role, component of the cytochrome b6-f complex, which mediates electron transfer between photosystem II (PSII) and photosystem I (PSI), cyclic electron flow around PSI, and state transitions. The sequence is that of Cytochrome f from Panax ginseng (Korean ginseng).